We begin with the raw amino-acid sequence, 196 residues long: Charged multivesicular body protein 1a (196 aa).

Position 1 is an N-acetylmethionine (M1). Residues 5–47 are a coiled coil; it reads LFQLKFTAKQLEKLAKKAEKDSKAEQAKVKKALLQKNVECARV. A Phosphoserine modification is found at S101. A coiled-coil region spans residues 102–124; that stretch reads TMDLQKVSSVMDRFEQQVQNLDV. S173 is modified (phosphoserine). Residues 173–196 are disordered; the sequence is SAVGESSVRSQEDQLSRRLAALRN. The MIT-interacting motif signature appears at 185-195; the sequence is DQLSRRLAALR.

This sequence belongs to the SNF7 family. In terms of assembly, probable peripherally associated component of the endosomal sorting required for transport complex III (ESCRT-III). ESCRT-III components are thought to multimerize to form a flat lattice on the perimeter membrane of the endosome. Several assembly forms of ESCRT-III may exist that interact and act sequentially. Self-associates. Interacts with CHMP1B. Interacts with VPS4A. Interacts with VPS4B. Interacts with PHF1. Interacts with IST1. Interacts with MITD1. Expressed in placenta, cultured skin fibroblasts and in osteoblast cell line MG-63.

The protein resides in the cytoplasm. It localises to the endosome membrane. The protein localises to the nucleus matrix. Probable peripherally associated component of the endosomal sorting required for transport complex III (ESCRT-III) which is involved in multivesicular bodies (MVBs) formation and sorting of endosomal cargo proteins into MVBs. MVBs contain intraluminal vesicles (ILVs) that are generated by invagination and scission from the limiting membrane of the endosome and mostly are delivered to lysosomes enabling degradation of membrane proteins, such as stimulated growth factor receptors, lysosomal enzymes and lipids. The MVB pathway appears to require the sequential function of ESCRT-O, -I,-II and -III complexes. ESCRT-III proteins mostly dissociate from the invaginating membrane before the ILV is released. The ESCRT machinery also functions in topologically equivalent membrane fission events, such as the terminal stages of cytokinesis and the budding of enveloped viruses (HIV-1 and other lentiviruses). ESCRT-III proteins are believed to mediate the necessary vesicle extrusion and/or membrane fission activities, possibly in conjunction with the AAA ATPase VPS4. Involved in cytokinesis. Involved in recruiting VPS4A and/or VPS4B to the midbody of dividing cells. May also be involved in chromosome condensation. Targets the Polycomb group (PcG) protein BMI1/PCGF4 to regions of condensed chromatin. May play a role in stable cell cycle progression and in PcG gene silencing. The polypeptide is Charged multivesicular body protein 1a (CHMP1A) (Homo sapiens (Human)).